Reading from the N-terminus, the 223-residue chain is ATP-dependent dethiobiotin synthetase BioD (223 aa).

T16 contacts Mg(2+). Residue K37 is part of the active site. S41 serves as a coordination point for substrate. Mg(2+) contacts are provided by D50 and E111. ATP is bound by residues D50, 111–114, and 171–172; these read EGAG and NR.

Belongs to the dethiobiotin synthetase family. In terms of assembly, homodimer. Requires Mg(2+) as cofactor.

The protein resides in the cytoplasm. It carries out the reaction (7R,8S)-7,8-diammoniononanoate + CO2 + ATP = (4R,5S)-dethiobiotin + ADP + phosphate + 3 H(+). Its pathway is cofactor biosynthesis; biotin biosynthesis; biotin from 7,8-diaminononanoate: step 1/2. Functionally, catalyzes a mechanistically unusual reaction, the ATP-dependent insertion of CO2 between the N7 and N8 nitrogen atoms of 7,8-diaminopelargonic acid (DAPA, also called 7,8-diammoniononanoate) to form a ureido ring. The sequence is that of ATP-dependent dethiobiotin synthetase BioD from Anaeromyxobacter dehalogenans (strain 2CP-C).